We begin with the raw amino-acid sequence, 479 residues long: Anaerobic nitric oxide reductase flavorubredoxin (479 aa).

Positions 30 to 210 (LRGSSYNSYL…PFSRLVTPKI (181 aa)) are zinc metallo-hydrolase. Residues H79, E81, D83, H147, D166, and H227 each contribute to the Fe cation site. A Flavodoxin-like domain is found at 254–393 (ITIFYDTMSN…LCRQHGRDIA (140 aa)). FMN-binding positions include 260–264 (TMSNN) and 342–369 (AFGS…EMSL). One can recognise a Rubredoxin-like domain in the interval 423-474 (GPKMQCSVCQWIYDPALGEPLQDVAPGTPWSDVPDNFLCPECSLGKDVFDVL). The Fe cation site is built by C428, C431, C461, and C464.

It in the N-terminal section; belongs to the zinc metallo-hydrolase group 3 family. As to quaternary structure, homotetramer. The cofactor is Fe cation. FMN is required as a cofactor.

It is found in the cytoplasm. It participates in nitrogen metabolism; nitric oxide reduction. Functionally, anaerobic nitric oxide reductase; uses NADH to detoxify nitric oxide (NO), protecting several 4Fe-4S NO-sensitive enzymes. Has at least 2 reductase partners, only one of which (NorW, flavorubredoxin reductase) has been identified. NO probably binds to the di-iron center; electrons enter from the NorW at rubredoxin and are transferred sequentially to the FMN center and the di-iron center. Also able to function as an aerobic oxygen reductase. The chain is Anaerobic nitric oxide reductase flavorubredoxin from Salmonella paratyphi B (strain ATCC BAA-1250 / SPB7).